The following is a 331-amino-acid chain: UPF0194 membrane protein YbhG (331 aa).

The N-terminal stretch at 1–19 is a signal peptide; sequence MKKPVVIGLAIAAIVAVIA. A coiled-coil region spans residues 107–208; it reads EEIAQAAAAV…LDLQDTTLIA (102 aa).

The protein belongs to the UPF0194 family.

The protein resides in the periplasm. The sequence is that of UPF0194 membrane protein YbhG from Salmonella agona (strain SL483).